We begin with the raw amino-acid sequence, 258 residues long: Cytochrome c oxidase subunit 2 (258 aa).

Residues 1 to 41 (MIVNECLFFTIALCDAAEPWQLGFQDAATPMMQGIIDLHHD) lie on the Mitochondrial intermembrane side of the membrane. A helical membrane pass occupies residues 42–58 (ILFFLILILVFVLWILV). The Mitochondrial matrix portion of the chain corresponds to 59–82 (RALWHFYYKKNPIPQRIVHGTTIE). Residues 83 to 104 (ILWTIFPSIILMFIAIPSFALL) form a helical membrane-spanning segment. The Mitochondrial intermembrane portion of the chain corresponds to 105–258 (YSMDEVVVDP…VSNLFIPPTS (154 aa)). 6 residues coordinate Cu cation: His-187, Cys-222, Glu-224, Cys-226, His-230, and Met-233. Glu-224 lines the Mg(2+) pocket.

The protein belongs to the cytochrome c oxidase subunit 2 family. In terms of assembly, component of the cytochrome c oxidase (complex IV, CIV), a multisubunit enzyme composed of a catalytic core of 3 subunits and several supernumerary subunits. The complex exists as a monomer or a dimer and forms supercomplexes (SCs) in the inner mitochondrial membrane with ubiquinol-cytochrome c oxidoreductase (cytochrome b-c1 complex, complex III, CIII). The cofactor is Cu cation.

It localises to the mitochondrion inner membrane. It catalyses the reaction 4 Fe(II)-[cytochrome c] + O2 + 8 H(+)(in) = 4 Fe(III)-[cytochrome c] + 2 H2O + 4 H(+)(out). In terms of biological role, component of the cytochrome c oxidase, the last enzyme in the mitochondrial electron transport chain which drives oxidative phosphorylation. The respiratory chain contains 3 multisubunit complexes succinate dehydrogenase (complex II, CII), ubiquinol-cytochrome c oxidoreductase (cytochrome b-c1 complex, complex III, CIII) and cytochrome c oxidase (complex IV, CIV), that cooperate to transfer electrons derived from NADH and succinate to molecular oxygen, creating an electrochemical gradient over the inner membrane that drives transmembrane transport and the ATP synthase. Cytochrome c oxidase is the component of the respiratory chain that catalyzes the reduction of oxygen to water. Electrons originating from reduced cytochrome c in the intermembrane space (IMS) are transferred via the dinuclear copper A center (CU(A)) of subunit 2 and heme A of subunit 1 to the active site in subunit 1, a binuclear center (BNC) formed by heme A3 and copper B (CU(B)). The BNC reduces molecular oxygen to 2 water molecules using 4 electrons from cytochrome c in the IMS and 4 protons from the mitochondrial matrix. The sequence is that of Cytochrome c oxidase subunit 2 (COX2) from Oenothera berteroana (Bertero's evening primrose).